A 337-amino-acid chain; its full sequence is MESATSLISEKQCECAHPNSDSAVQGSSLRWSIAAIESLLDLPFSDLIFQAQTVHRQYHDANAVQLSTLISVKTGGCSEDCAYCPQAARYHTGVENQAILSREEVVAAATQAKESGATRFCMGAAWRGPKQRDIEYMTEVISAVKALGMETCATLGILKPGQATQLKQAGLDYYNHNLDTAPEFYGEIITTREYQDRLDTLEEVRGANINVCCGGIVGLGESRMARAGLIAQLANLDPYPESVPINYLVQVEGTPLYGTPELDPFEFVRTIAAARITMPKAMVRLSAGRRQMPEAIQALCFLAGANSIFYGDKLLTTGNPDTEKDLALFEKLGLHAL.

The Radical SAM core domain occupies 62–289 (NAVQLSTLIS…KAMVRLSAGR (228 aa)). The [4Fe-4S] cluster site is built by C77, C81, and C84. Residues C121, C152, C212, and R284 each contribute to the [2Fe-2S] cluster site.

It belongs to the radical SAM superfamily. Biotin synthase family. In terms of assembly, homodimer. It depends on [4Fe-4S] cluster as a cofactor. The cofactor is [2Fe-2S] cluster.

The catalysed reaction is (4R,5S)-dethiobiotin + (sulfur carrier)-SH + 2 reduced [2Fe-2S]-[ferredoxin] + 2 S-adenosyl-L-methionine = (sulfur carrier)-H + biotin + 2 5'-deoxyadenosine + 2 L-methionine + 2 oxidized [2Fe-2S]-[ferredoxin]. It participates in cofactor biosynthesis; biotin biosynthesis; biotin from 7,8-diaminononanoate: step 2/2. Its function is as follows. Catalyzes the conversion of dethiobiotin (DTB) to biotin by the insertion of a sulfur atom into dethiobiotin via a radical-based mechanism. This is Biotin synthase from Nitrosomonas europaea (strain ATCC 19718 / CIP 103999 / KCTC 2705 / NBRC 14298).